We begin with the raw amino-acid sequence, 406 residues long: Phosphatidylinositol 5-phosphate 4-kinase type-2 alpha (406 aa).

At alanine 2 the chain carries N-acetylalanine. Threonine 3 is subject to Phosphothreonine. Residue serine 14 is modified to Phosphoserine. Residues 33–405 form the PIPK domain; the sequence is ASDPLLSVLM…RFLDFIGHIL (373 aa). Residues 59 to 65 are required for interaction with PIP5K1A; it reads VMLMPDD. N6-acetyllysine is present on residues lysine 89 and lysine 145. Positions 287 to 328 are disordered; it reads EQEEVECEENEGEEEGESDGAHPIGTPPDSPGNTLNSSPPLA. A compositionally biased stretch (acidic residues) spans 289 to 304; that stretch reads EEVECEENEGEEEGES.

As to quaternary structure, homodimer. Interacts with PIP4K2B; the interaction may regulate localization to the nucleus. Probably interacts with PIP5K1A; the interaction inhibits PIP5K1A kinase activity. In terms of processing, phosphorylated in tyrosines. Phosphorylation is induced by light and increases kinase activity.

It localises to the cell membrane. Its subcellular location is the nucleus. The protein resides in the lysosome. It is found in the cytoplasm. The protein localises to the photoreceptor inner segment. It localises to the cell projection. Its subcellular location is the cilium. The protein resides in the photoreceptor outer segment. The catalysed reaction is a 1,2-diacyl-sn-glycero-3-phospho-(1D-myo-inositol-5-phosphate) + ATP = a 1,2-diacyl-sn-glycero-3-phospho-(1D-myo-inositol-4,5-bisphosphate) + ADP + H(+). The enzyme catalyses 1,2-dihexadecanoyl-sn-glycero-3-phospho-(1D-myo-inositol-5-phosphate) + ATP = 1,2-dihexadecanoyl-sn-glycero-3-phospho-(1D-myo-inositol-4,5-bisphosphate) + ADP + H(+). It catalyses the reaction 1,2-dihexadecanoyl-sn-glycero-3-phospho-(1D-myo-inositol-5-phosphate) + GTP = 1,2-dihexadecanoyl-sn-glycero-3-phospho-(1D-myo-inositol-4,5-bisphosphate) + GDP + H(+). In rod outer segments, activated by light. In terms of biological role, catalyzes the phosphorylation of phosphatidylinositol 5-phosphate (PtdIns5P) on the fourth hydroxyl of the myo-inositol ring, to form phosphatidylinositol 4,5-bisphosphate (PtdIns(4,5)P2). Has both ATP- and GTP-dependent kinase activities. May exert its function by regulating the levels of PtdIns5P, which functions in the cytosol by increasing AKT activity and in the nucleus signals through ING2. May regulate the pool of cytosolic PtdIns5P in response to the activation of tyrosine phosphorylation. Required for lysosome-peroxisome membrane contacts and intracellular cholesterol transport through modulating peroxisomal PtdIns(4,5)P2 level. In collaboration with PIP4K2B, has a role in mediating autophagy in times of nutrient stress. Required for autophagosome-lysosome fusion and the regulation of cellular lipid metabolism. Negatively regulates insulin signaling through a catalytic-independent mechanism. PIP4Ks interact with PIP5Ks and suppress PIP5K-mediated PtdIns(4,5)P2 synthesis and insulin-dependent conversion to PtdIns(3,4,5)P3. May be involved in thrombopoiesis, and the terminal maturation of megakaryocytes and regulation of their size. This Rattus norvegicus (Rat) protein is Phosphatidylinositol 5-phosphate 4-kinase type-2 alpha.